The following is a 689-amino-acid chain: Polyribonucleotide nucleotidyltransferase (689 aa).

Positions 482 and 488 each coordinate Mg(2+). Residues Pro-549–Val-608 enclose the KH domain. An S1 motif domain is found at Gly-618 to Lys-686.

The protein belongs to the polyribonucleotide nucleotidyltransferase family. Mg(2+) serves as cofactor.

It is found in the cytoplasm. The enzyme catalyses RNA(n+1) + phosphate = RNA(n) + a ribonucleoside 5'-diphosphate. In terms of biological role, involved in mRNA degradation. Catalyzes the phosphorolysis of single-stranded polyribonucleotides processively in the 3'- to 5'-direction. The chain is Polyribonucleotide nucleotidyltransferase from Endomicrobium trichonymphae.